The primary structure comprises 395 residues: Transcription termination/antitermination protein NusA (395 aa).

The 65-residue stretch at 137–201 folds into the S1 motif domain; the sequence is NSVLMGQVIL…TKKGLLLELS (65 aa). KH domains are found at residues 243–291 and 331–378; these read SHNS…TLAL and KVRL…NENE.

This sequence belongs to the NusA family. As to quaternary structure, monomer. Binds directly to the core enzyme of the DNA-dependent RNA polymerase and to nascent RNA.

It is found in the cytoplasm. In terms of biological role, participates in both transcription termination and antitermination. The chain is Transcription termination/antitermination protein NusA from Helicobacter pylori (strain J99 / ATCC 700824) (Campylobacter pylori J99).